Here is a 232-residue protein sequence, read N- to C-terminus: Probable proteasome subunit alpha type-3 (232 aa).

It belongs to the peptidase T1A family. In terms of assembly, the 26S proteasome consists of a 20S proteasome core and two 19S regulatory subunits. The 20S proteasome core is composed of 28 subunits that are arranged in four stacked rings, resulting in a barrel-shaped structure. The two end rings are each formed by seven alpha subunits, and the two central rings are each formed by seven beta subunits. The catalytic chamber with the active sites is on the inside of the barrel.

Its subcellular location is the cytoplasm. The protein localises to the nucleus. Its function is as follows. The proteasome degrades poly-ubiquitinated proteins in the cytoplasm and in the nucleus. It is essential for the regulated turnover of proteins and for the removal of misfolded proteins. The proteasome is a multicatalytic proteinase complex that is characterized by its ability to cleave peptides with Arg, Phe, Tyr, Leu, and Glu adjacent to the leaving group at neutral or slightly basic pH. It has an ATP-dependent proteolytic activity. This Encephalitozoon cuniculi (strain GB-M1) (Microsporidian parasite) protein is Probable proteasome subunit alpha type-3 (PRE9).